We begin with the raw amino-acid sequence, 146 residues long: MNIIAQLEAEQCAKIEEKRQFPAFKPGDTVRVMVRVTEGTRTRVQAYEGVCIARSGGGLNETFTVRKISYGEGVERVFPVYSPLIEAVELVRRGKVRRAKLYYLRGLRGKAARIAEKRDYRKKGEKGVEKVETTPVSADIETQVAE.

A disordered region spans residues aspartate 119–glutamate 146.

The protein belongs to the bacterial ribosomal protein bL19 family.

This protein is located at the 30S-50S ribosomal subunit interface and may play a role in the structure and function of the aminoacyl-tRNA binding site. The protein is Large ribosomal subunit protein bL19 of Bartonella tribocorum (strain CIP 105476 / IBS 506).